The chain runs to 215 residues: Elongation factor Ts (215 aa).

Positions 80–83 (TDFV) are involved in Mg(2+) ion dislocation from EF-Tu.

Belongs to the EF-Ts family.

Its subcellular location is the cytoplasm. In terms of biological role, associates with the EF-Tu.GDP complex and induces the exchange of GDP to GTP. It remains bound to the aminoacyl-tRNA.EF-Tu.GTP complex up to the GTP hydrolysis stage on the ribosome. In Alkaliphilus metalliredigens (strain QYMF), this protein is Elongation factor Ts.